Here is a 354-residue protein sequence, read N- to C-terminus: NADH-quinone oxidoreductase subunit H (354 aa).

8 consecutive transmembrane segments (helical) span residues 23-43 (LVRAVCIILPLLLCVAYLILW), 91-111 (YIIAPLMVLMPAVAIWAVVPF), 124-144 (LLYVMAISSVGVYGVILAGWA), 162-182 (ISYEIAMGFALVTVLMVTGSL), 203-223 (ILSWNWLSLLPMFGVYFISGV), 250-270 (GMAFALFFLAEYINMIVISAM), 291-311 (IPGFFWLLIKVFLLLSVFIWL), and 330-350 (IFIPLTVGWLIIVAIWLVSPW).

The protein belongs to the complex I subunit 1 family. NDH-1 is composed of 14 different subunits. Subunits NuoA, H, J, K, L, M, N constitute the membrane sector of the complex.

The protein localises to the cell inner membrane. The enzyme catalyses a quinone + NADH + 5 H(+)(in) = a quinol + NAD(+) + 4 H(+)(out). NDH-1 shuttles electrons from NADH, via FMN and iron-sulfur (Fe-S) centers, to quinones in the respiratory chain. The immediate electron acceptor for the enzyme in this species is believed to be ubiquinone. Couples the redox reaction to proton translocation (for every two electrons transferred, four hydrogen ions are translocated across the cytoplasmic membrane), and thus conserves the redox energy in a proton gradient. This subunit may bind ubiquinone. This is NADH-quinone oxidoreductase subunit H from Ralstonia nicotianae (strain ATCC BAA-1114 / GMI1000) (Ralstonia solanacearum).